We begin with the raw amino-acid sequence, 218 residues long: Probable nicotinate-nucleotide adenylyltransferase (218 aa).

Belongs to the NadD family.

The catalysed reaction is nicotinate beta-D-ribonucleotide + ATP + H(+) = deamido-NAD(+) + diphosphate. Its pathway is cofactor biosynthesis; NAD(+) biosynthesis; deamido-NAD(+) from nicotinate D-ribonucleotide: step 1/1. Functionally, catalyzes the reversible adenylation of nicotinate mononucleotide (NaMN) to nicotinic acid adenine dinucleotide (NaAD). The sequence is that of Probable nicotinate-nucleotide adenylyltransferase from Acidithiobacillus ferrooxidans (strain ATCC 23270 / DSM 14882 / CIP 104768 / NCIMB 8455) (Ferrobacillus ferrooxidans (strain ATCC 23270)).